A 227-amino-acid polypeptide reads, in one-letter code: Cytochrome c oxidase subunit 2 (227 aa).

The Mitochondrial intermembrane segment spans residues 1–14 (MAYPFQLGLQDATS). The chain crosses the membrane as a helical span at residues 15-45 (PIMEELTNFHDHTLMIVFLISSLVLYIISLM). Residues 46-59 (LTTKLTHTSTMDAQ) lie on the Mitochondrial matrix side of the membrane. A helical membrane pass occupies residues 60 to 87 (EVETIWTILPAAILVLIALPSLRILYMM). Residues 88-227 (DEINNPVLTV…YFESWSASMI (140 aa)) lie on the Mitochondrial intermembrane side of the membrane. Residues histidine 161, cysteine 196, glutamate 198, cysteine 200, histidine 204, and methionine 207 each coordinate Cu cation. Mg(2+) is bound at residue glutamate 198. Tyrosine 218 carries the phosphotyrosine modification.

This sequence belongs to the cytochrome c oxidase subunit 2 family. Component of the cytochrome c oxidase (complex IV, CIV), a multisubunit enzyme composed of 14 subunits. The complex is composed of a catalytic core of 3 subunits MT-CO1, MT-CO2 and MT-CO3, encoded in the mitochondrial DNA, and 11 supernumerary subunits COX4I, COX5A, COX5B, COX6A, COX6B, COX6C, COX7A, COX7B, COX7C, COX8 and NDUFA4, which are encoded in the nuclear genome. The complex exists as a monomer or a dimer and forms supercomplexes (SCs) in the inner mitochondrial membrane with NADH-ubiquinone oxidoreductase (complex I, CI) and ubiquinol-cytochrome c oxidoreductase (cytochrome b-c1 complex, complex III, CIII), resulting in different assemblies (supercomplex SCI(1)III(2)IV(1) and megacomplex MCI(2)III(2)IV(2)). Found in a complex with TMEM177, COA6, COX18, COX20, SCO1 and SCO2. Interacts with TMEM177 in a COX20-dependent manner. Interacts with COX20. Interacts with COX16. Requires Cu cation as cofactor.

It is found in the mitochondrion inner membrane. It catalyses the reaction 4 Fe(II)-[cytochrome c] + O2 + 8 H(+)(in) = 4 Fe(III)-[cytochrome c] + 2 H2O + 4 H(+)(out). Component of the cytochrome c oxidase, the last enzyme in the mitochondrial electron transport chain which drives oxidative phosphorylation. The respiratory chain contains 3 multisubunit complexes succinate dehydrogenase (complex II, CII), ubiquinol-cytochrome c oxidoreductase (cytochrome b-c1 complex, complex III, CIII) and cytochrome c oxidase (complex IV, CIV), that cooperate to transfer electrons derived from NADH and succinate to molecular oxygen, creating an electrochemical gradient over the inner membrane that drives transmembrane transport and the ATP synthase. Cytochrome c oxidase is the component of the respiratory chain that catalyzes the reduction of oxygen to water. Electrons originating from reduced cytochrome c in the intermembrane space (IMS) are transferred via the dinuclear copper A center (CU(A)) of subunit 2 and heme A of subunit 1 to the active site in subunit 1, a binuclear center (BNC) formed by heme A3 and copper B (CU(B)). The BNC reduces molecular oxygen to 2 water molecules using 4 electrons from cytochrome c in the IMS and 4 protons from the mitochondrial matrix. This is Cytochrome c oxidase subunit 2 (MT-CO2) from Conilurus penicillatus (Brush-tailed rabbit-rat).